The following is a 51-amino-acid chain: Ovomucoid (51 aa).

A Kazal-like domain is found at 3–51; the sequence is VDCSGYPKPACTLEYFPLCGSDNQTYANKCAFCNAVVEKNVTLRHLGKC. Cystine bridges form between cysteine 5–cysteine 35, cysteine 13–cysteine 32, and cysteine 21–cysteine 51. Asparagine 42 is a glycosylation site (N-linked (GlcNAc...) asparagine).

The protein localises to the secreted. The chain is Ovomucoid from Nothoprocta cinerascens (Brushland tinamou).